The following is a 29-amino-acid chain: Cysteine-rich venom protein 25-A (29 aa).

Belongs to the CRISP family. Post-translationally, contains 8 disulfide bonds. As to expression, expressed by the venom gland.

The protein localises to the secreted. The protein is Cysteine-rich venom protein 25-A of Naja haje haje (Egyptian cobra).